A 213-amino-acid chain; its full sequence is StAR-related lipid transfer protein 5 (213 aa).

The START domain maps to M1–E213.

Its function is as follows. May be involved in the intracellular transport of sterols or other lipids. May bind cholesterol or other sterols. The chain is StAR-related lipid transfer protein 5 (STARD5) from Homo sapiens (Human).